The following is a 426-amino-acid chain: 4-aminobutyrate aminotransferase GabT (426 aa).

Pyridoxal 5'-phosphate contacts are provided by residues 111–112 (GS) and Gln-242. Lys-268 bears the N6-(pyridoxal phosphate)lysine mark. Position 297 (Thr-297) interacts with pyridoxal 5'-phosphate.

Belongs to the class-III pyridoxal-phosphate-dependent aminotransferase family. In terms of assembly, homotetramer. Pyridoxal 5'-phosphate is required as a cofactor.

The enzyme catalyses 4-aminobutanoate + 2-oxoglutarate = succinate semialdehyde + L-glutamate. It catalyses the reaction 5-aminopentanoate + 2-oxoglutarate = 5-oxopentanoate + L-glutamate. It participates in amino-acid degradation; 4-aminobutanoate degradation. Its pathway is amino-acid degradation. Its function is as follows. Pyridoxal phosphate-dependent enzyme that catalyzes transamination between primary amines and alpha-keto acids. Catalyzes the transfer of the amino group from gamma-aminobutyrate (GABA) to alpha-ketoglutarate (KG) to yield succinic semialdehyde (SSA) and glutamate. Thereby functions in a GABA degradation pathway that allows some E.coli strains to utilize GABA as a nitrogen source for growth. Also catalyzes the conversion of 5-aminovalerate to glutarate semialdehyde, as part of a L-lysine degradation pathway that proceeds via cadaverine, glutarate and L-2-hydroxyglutarate. The protein is 4-aminobutyrate aminotransferase GabT (gabT) of Escherichia coli (strain K12).